Consider the following 440-residue polypeptide: Xylose isomerase (440 aa).

Residues histidine 101 and aspartate 104 contribute to the active site. Positions 232, 268, 271, 296, 307, 309, and 339 each coordinate Mg(2+).

The protein belongs to the xylose isomerase family. In terms of assembly, homotetramer. Mg(2+) serves as cofactor.

The protein resides in the cytoplasm. It carries out the reaction alpha-D-xylose = alpha-D-xylulofuranose. This chain is Xylose isomerase, found in Enterobacter sp. (strain 638).